Consider the following 232-residue polypeptide: Purine nucleoside phosphorylase DeoD-type (232 aa).

His4 is an a purine D-ribonucleoside binding site. Phosphate-binding positions include Gly20, Arg24, Arg43, and 87–90; that span reads RVGS. A purine D-ribonucleoside is bound by residues Glu162, 178–180, and 202–203; these read EME and SD. Residue Asp203 is the Proton donor of the active site.

It belongs to the PNP/UDP phosphorylase family. As to quaternary structure, homohexamer; trimer of homodimers.

It catalyses the reaction a purine D-ribonucleoside + phosphate = a purine nucleobase + alpha-D-ribose 1-phosphate. It carries out the reaction a purine 2'-deoxy-D-ribonucleoside + phosphate = a purine nucleobase + 2-deoxy-alpha-D-ribose 1-phosphate. Functionally, catalyzes the reversible phosphorolytic breakdown of the N-glycosidic bond in the beta-(deoxy)ribonucleoside molecules, with the formation of the corresponding free purine bases and pentose-1-phosphate. The chain is Purine nucleoside phosphorylase DeoD-type from Bacillus velezensis (strain DSM 23117 / BGSC 10A6 / LMG 26770 / FZB42) (Bacillus amyloliquefaciens subsp. plantarum).